Here is a 351-residue protein sequence, read N- to C-terminus: Nicotinate-nucleotide--dimethylbenzimidazole phosphoribosyltransferase (351 aa).

Catalysis depends on Glu317, which acts as the Proton acceptor.

The protein belongs to the CobT family.

The enzyme catalyses 5,6-dimethylbenzimidazole + nicotinate beta-D-ribonucleotide = alpha-ribazole 5'-phosphate + nicotinate + H(+). It participates in nucleoside biosynthesis; alpha-ribazole biosynthesis; alpha-ribazole from 5,6-dimethylbenzimidazole: step 1/2. Catalyzes the synthesis of alpha-ribazole-5'-phosphate from nicotinate mononucleotide (NAMN) and 5,6-dimethylbenzimidazole (DMB). The protein is Nicotinate-nucleotide--dimethylbenzimidazole phosphoribosyltransferase of Pseudomonas putida (strain W619).